Reading from the N-terminus, the 212-residue chain is Redox-sensing transcriptional repressor Rex (212 aa).

The H-T-H motif DNA-binding region spans 17–56 (LYYRIFKRFNTDGIEKASSKQIADALGIDSATVRRDFSYF). Position 91–96 (91–96 (GCGNIG)) interacts with NAD(+).

This sequence belongs to the transcriptional regulatory Rex family. As to quaternary structure, homodimer.

Its subcellular location is the cytoplasm. Its function is as follows. Modulates transcription in response to changes in cellular NADH/NAD(+) redox state. The sequence is that of Redox-sensing transcriptional repressor Rex from Streptococcus agalactiae serotype III (strain NEM316).